The chain runs to 210 residues: Pyridoxine/pyridoxamine 5'-phosphate oxidase (210 aa).

Substrate contacts are provided by residues 7–10 (RQSY) and Lys-65. Residues 60–65 (RIVLIK), 75–76 (YT), Arg-81, Lys-82, and Gln-104 each bind FMN. Residues Tyr-122, Arg-126, and Ser-130 each coordinate substrate. Residues 139 to 140 (QS) and Trp-182 each bind FMN. 188–190 (RLH) lines the substrate pocket. Arg-192 lines the FMN pocket.

It belongs to the pyridoxamine 5'-phosphate oxidase family. Homodimer. It depends on FMN as a cofactor.

The catalysed reaction is pyridoxamine 5'-phosphate + O2 + H2O = pyridoxal 5'-phosphate + H2O2 + NH4(+). The enzyme catalyses pyridoxine 5'-phosphate + O2 = pyridoxal 5'-phosphate + H2O2. Its pathway is cofactor metabolism; pyridoxal 5'-phosphate salvage; pyridoxal 5'-phosphate from pyridoxamine 5'-phosphate: step 1/1. It participates in cofactor metabolism; pyridoxal 5'-phosphate salvage; pyridoxal 5'-phosphate from pyridoxine 5'-phosphate: step 1/1. Its function is as follows. Catalyzes the oxidation of either pyridoxine 5'-phosphate (PNP) or pyridoxamine 5'-phosphate (PMP) into pyridoxal 5'-phosphate (PLP). In Bordetella petrii (strain ATCC BAA-461 / DSM 12804 / CCUG 43448), this protein is Pyridoxine/pyridoxamine 5'-phosphate oxidase.